Here is a 405-residue protein sequence, read N- to C-terminus: MSGSWLDEIPARIAELDAAHLRRRRRATAPLQGAASGAHMEVDGHPMLAFCSNDYLGLAGHPTLVRAACAGAQAFGVGSGGSPLVSGHSTANAALEEQLAHFVQLPRALYFYAGYATNAGIVPALVGAGDALFSDALNHACLIDGARLSRAHVHRYAHADLGDLAAQLAASTARRKLVISDAVFSMDGNVADIRGLLALCDQYDALLLLDDAHGFGVLGPQGRGSLAEAGLTGANASPRVLYMATLGKAAGVAGAFVAGSDMLVEWLLQKTRSYIFATAAPPMLASALQASVALIEAEDERREALAERIAELRAGLTPLLARTGWQLLPSRTAVQALVIGSNATALAVMEGLRERGLWVPAIRPPTVPEGTARLRIALSASHTRIDVQLLLTALDEVSRLAPPLP.

Residue arginine 23 participates in substrate binding. 114–115 serves as a coordination point for pyridoxal 5'-phosphate; it reads GY. Residue histidine 139 coordinates substrate. The pyridoxal 5'-phosphate site is built by serine 185, histidine 213, and threonine 245. Lysine 248 bears the N6-(pyridoxal phosphate)lysine mark. Threonine 366 lines the substrate pocket.

The protein belongs to the class-II pyridoxal-phosphate-dependent aminotransferase family. BioF subfamily. As to quaternary structure, homodimer. Pyridoxal 5'-phosphate serves as cofactor.

The enzyme catalyses 6-carboxyhexanoyl-[ACP] + L-alanine + H(+) = (8S)-8-amino-7-oxononanoate + holo-[ACP] + CO2. Its pathway is cofactor biosynthesis; biotin biosynthesis. Catalyzes the decarboxylative condensation of pimeloyl-[acyl-carrier protein] and L-alanine to produce 8-amino-7-oxononanoate (AON), [acyl-carrier protein], and carbon dioxide. The chain is 8-amino-7-oxononanoate synthase from Delftia acidovorans (strain DSM 14801 / SPH-1).